The primary structure comprises 478 residues: tRNA(Ile)-lysidine synthase (478 aa).

27 to 32 (SGGSDS) contacts ATP.

This sequence belongs to the tRNA(Ile)-lysidine synthase family.

The protein localises to the cytoplasm. The catalysed reaction is cytidine(34) in tRNA(Ile2) + L-lysine + ATP = lysidine(34) in tRNA(Ile2) + AMP + diphosphate + H(+). Its function is as follows. Ligates lysine onto the cytidine present at position 34 of the AUA codon-specific tRNA(Ile) that contains the anticodon CAU, in an ATP-dependent manner. Cytidine is converted to lysidine, thus changing the amino acid specificity of the tRNA from methionine to isoleucine. This Rickettsia conorii (strain ATCC VR-613 / Malish 7) protein is tRNA(Ile)-lysidine synthase.